Here is a 287-residue protein sequence, read N- to C-terminus: Rhodopsin (287 aa).

At 1–5 (VNGAA) the chain is on the extracellular side. The chain crosses the membrane as a helical span at residues 6-30 (YAGLCAYMFLLILVGFPVNFLTLYV). The Cytoplasmic segment spans residues 31-42 (TLEHKKLRTPLN). A helical transmembrane segment spans residues 43 to 65 (YILLNLAVADLFMVLGGFTTTMY). Residues 66-79 (TSAHGYFVLGRLGC) are Extracellular-facing. Residues C79 and C156 are joined by a disulfide bond. The helical transmembrane segment at 80–102 (NVEGFFATLGGEIALWSLVVLAV) threads the bilayer. Residues 103-105 (ERW) carry the 'Ionic lock' involved in activated form stabilization motif. Over 103 to 121 (ERWIVVCKPISNFRFTEEH) the chain is Cytoplasmic. A helical membrane pass occupies residues 122–142 (AIMGLGFNWVMASACAVPPLV). Residues 143–171 (GWSRYIPEGMQCSCGINYYTRSEGFNNES) lie on the Extracellular side of the membrane. The N-linked (GlcNAc...) asparagine glycan is linked to N169. The chain crosses the membrane as a helical span at residues 172–193 (LVMKMLICHFLIPLFVIFFCYG). Residues 194–221 (RMLCAVKEAAAAQQESETTQRAEREVSR) lie on the Cytoplasmic side of the membrane. Residues 222-243 (MVVIMVISFLVCWLPYASVAWY) traverse the membrane as a helical segment. Residues 244–255 (IFCNQGSEFGPV) are Extracellular-facing. Residues 256–277 (FMTLPAFFAKSASIYNPLIYIC) form a helical membrane-spanning segment. K265 carries the post-translational modification N6-(retinylidene)lysine. Residues 278–287 (MNKHSRHCMI) lie on the Cytoplasmic side of the membrane.

This sequence belongs to the G-protein coupled receptor 1 family. Opsin subfamily. In terms of processing, phosphorylated on some or all of the serine and threonine residues present in the C-terminal region. Contains one covalently linked retinal chromophore.

The protein localises to the membrane. It localises to the cell projection. The protein resides in the cilium. Its subcellular location is the photoreceptor outer segment. Functionally, photoreceptor required for image-forming vision at low light intensity. While most salt water fish species use retinal as chromophore, most freshwater fish use 3-dehydroretinal, or a mixture of retinal and 3-dehydroretinal. Light-induced isomerization of 11-cis to all-trans retinal triggers a conformational change that activates signaling via G-proteins. Subsequent receptor phosphorylation mediates displacement of the bound G-protein alpha subunit by arrestin and terminates signaling. This Taurulus bubalis (Long-spined sea scorpion) protein is Rhodopsin (rho).